Reading from the N-terminus, the 143-residue chain is Ribosome maturation factor RimP (143 aa).

It belongs to the RimP family.

The protein localises to the cytoplasm. Functionally, required for maturation of 30S ribosomal subunits. This chain is Ribosome maturation factor RimP, found in Borrelia hermsii (strain HS1 / DAH).